We begin with the raw amino-acid sequence, 937 residues long: Valine--tRNA ligase (937 aa).

Residues 44–54 (PNVTGTLHMGH) carry the 'HIGH' region motif. A 'KMSKS' region motif is present at residues 548–552 (KMSKS). ATP is bound at residue K551. Positions 874–937 (AAETARLTKE…KLKAQLLKLA (64 aa)) form a coiled coil.

This sequence belongs to the class-I aminoacyl-tRNA synthetase family. ValS type 1 subfamily. Monomer.

The protein localises to the cytoplasm. The catalysed reaction is tRNA(Val) + L-valine + ATP = L-valyl-tRNA(Val) + AMP + diphosphate. In terms of biological role, catalyzes the attachment of valine to tRNA(Val). As ValRS can inadvertently accommodate and process structurally similar amino acids such as threonine, to avoid such errors, it has a 'posttransfer' editing activity that hydrolyzes mischarged Thr-tRNA(Val) in a tRNA-dependent manner. This Laribacter hongkongensis (strain HLHK9) protein is Valine--tRNA ligase.